We begin with the raw amino-acid sequence, 209 residues long: Orotate phosphoribosyltransferase (209 aa).

Residues Arg-96, Lys-100, His-102, and 122-130 contribute to the 5-phospho-alpha-D-ribose 1-diphosphate site; that span reads EDLISTGGS. An orotate-binding site is contributed by Ser-126.

Belongs to the purine/pyrimidine phosphoribosyltransferase family. PyrE subfamily. In terms of assembly, homodimer. The cofactor is Mg(2+).

The enzyme catalyses orotidine 5'-phosphate + diphosphate = orotate + 5-phospho-alpha-D-ribose 1-diphosphate. Its pathway is pyrimidine metabolism; UMP biosynthesis via de novo pathway; UMP from orotate: step 1/2. In terms of biological role, catalyzes the transfer of a ribosyl phosphate group from 5-phosphoribose 1-diphosphate to orotate, leading to the formation of orotidine monophosphate (OMP). This Lactococcus lactis subsp. cremoris (strain MG1363) protein is Orotate phosphoribosyltransferase.